A 448-amino-acid chain; its full sequence is Putative diacyglycerol O-acyltransferase MT3848 (448 aa).

Catalysis depends on His136, which acts as the Proton acceptor.

This sequence belongs to the long-chain O-acyltransferase family.

It carries out the reaction an acyl-CoA + a 1,2-diacyl-sn-glycerol = a triacyl-sn-glycerol + CoA. It functions in the pathway glycerolipid metabolism; triacylglycerol biosynthesis. This Mycobacterium tuberculosis (strain CDC 1551 / Oshkosh) protein is Putative diacyglycerol O-acyltransferase MT3848.